Reading from the N-terminus, the 187-residue chain is MGIDIERHHVKKSQRSKPASENVYLKLLVKLYRFLARRTDSRFNKAILKRLFQSKTNRPPISISKIAALTSRKSASSQNKTTVVVGTVTDDERMLTVPKLSIAALRFTKSARARILKAGGEVLTLDQLALRAPTGSNTVLVRGKKHAREAYRHFGFGPHKHKAPYVRSEGRKFERARGRRKSRAFKV.

A phosphoserine mark is found at S16 and S64. Phosphothreonine is present on residues T87, T89, and T134. S136 carries the phosphoserine modification. T138 is subject to Phosphothreonine.

Belongs to the eukaryotic ribosomal protein eL18 family. In terms of assembly, component of the large ribosomal subunit (LSU). Mature yeast ribosomes consist of a small (40S) and a large (60S) subunit. The 40S small subunit contains 1 molecule of ribosomal RNA (18S rRNA) and at least 33 different proteins. The large 60S subunit contains 3 rRNA molecules (25S, 5.8S and 5S rRNA) and at least 46 different proteins. eL18 interacts with NAP1.

The protein localises to the cytoplasm. Functionally, component of the ribosome, a large ribonucleoprotein complex responsible for the synthesis of proteins in the cell. The small ribosomal subunit (SSU) binds messenger RNAs (mRNAs) and translates the encoded message by selecting cognate aminoacyl-transfer RNA (tRNA) molecules. The large subunit (LSU) contains the ribosomal catalytic site termed the peptidyl transferase center (PTC), which catalyzes the formation of peptide bonds, thereby polymerizing the amino acids delivered by tRNAs into a polypeptide chain. The nascent polypeptides leave the ribosome through a tunnel in the LSU and interact with protein factors that function in enzymatic processing, targeting, and the membrane insertion of nascent chains at the exit of the ribosomal tunnel. The protein is Large ribosomal subunit protein eL18A (rpl1801) of Schizosaccharomyces pombe (strain 972 / ATCC 24843) (Fission yeast).